The sequence spans 339 residues: Serine racemase (339 aa).

E13 is a Mg(2+) binding site. Residues S31, S32, I33, K51, and T52 each contribute to the ATP site. The active-site Proton acceptor is K56. Position 56 is an N6-(pyridoxal phosphate)lysine (K56). Residue P69 coordinates Ca(2+). The residue at position 71 (T71) is a Phosphothreonine. Residue T81 coordinates Ca(2+). The Proton acceptor role is filled by S84. N86 contacts pyridoxal 5'-phosphate. Residue Q89 participates in ATP binding. At C113 the chain carries S-nitrosocysteine. ATP is bound at residue Y121. Residue N154 coordinates pyridoxal 5'-phosphate. Mg(2+) is bound at residue D178. Pyridoxal 5'-phosphate-binding residues include G185, G186, G187, G188, and M189. Residues E210, A214, D216, and N247 each coordinate Mg(2+). Ca(2+) is bound by residues E210, A214, D216, and N247. Residues E210, A214, and D216 each contribute to the Mn(2+) site. K279 contacts ATP. S313 contributes to the pyridoxal 5'-phosphate binding site. N316 serves as a coordination point for ATP.

It belongs to the serine/threonine dehydratase family. In terms of assembly, homodimer. The cofactor is Mg(2+). Mn(2+) serves as cofactor. Requires Ca(2+) as cofactor. Pyridoxal 5'-phosphate is required as a cofactor. In terms of processing, S-nitrosylated, leading to decrease the enzyme activity. Expressed in the hippocampus (at protein level). Expressed in the small intestine.

The enzyme catalyses L-serine = D-serine. It catalyses the reaction D-serine = pyruvate + NH4(+). It carries out the reaction L-serine = pyruvate + NH4(+). Its activity is regulated as follows. Allosterically activated by magnesium, and possibly also other divalent metal cations. Allosterically activated by ATP, ADP or GTP. Functionally, catalyzes the synthesis of D-serine from L-serine. D-serine is a key coagonist with glutamate at NMDA receptors. Has dehydratase activity towards both L-serine and D-serine. This chain is Serine racemase (Srr), found in Mus musculus (Mouse).